We begin with the raw amino-acid sequence, 713 residues long: Endopolyphosphatase (713 aa).

Residues 1 to 19 (MSVLIDEKSHRSSGSTRSR) are Cytoplasmic-facing. Residues 20–40 (IVVTVVGVLLMVSGLAVMLGH) form a helical; Signal-anchor for type II membrane protein membrane-spanning segment. Over 41 to 713 (QSGSANEALG…SSEYENMGMG (673 aa)) the chain is Vacuolar. Residues 399-418 (SDDDDNSDSDSDDDDEDTSL) are compositionally biased toward acidic residues. The segment at 399 to 430 (SDDDDNSDSDSDDDDEDTSLEESYSNFNSPIL) is disordered. 2 N-linked (GlcNAc...) asparagine glycosylation sites follow: Asn-507 and Asn-645. Basic residues predominate over residues 640–659 (VKEKKNKSNKKSKKKKKNKD). Positions 640–684 (VKEKKNKSNKKSKKKKKNKDKRLLENSEPLKQDGSKDSRLEQDRV) are disordered. Positions 660–683 (KRLLENSEPLKQDGSKDSRLEQDR) are enriched in basic and acidic residues.

It belongs to the endopolyphosphatase PPN1 family. A divalent metal cation serves as cofactor. Processing by proteases in the vacuole may be required for activation.

It is found in the vacuole membrane. It carries out the reaction [phosphate](n+1) + n H2O = (n+1) phosphate + n H(+). In terms of biological role, catalyzes the hydrolysis of inorganic polyphosphate (polyP) chains of many hundreds of phosphate residues into shorter lengths. This chain is Endopolyphosphatase (PPN1), found in Debaryomyces hansenii (strain ATCC 36239 / CBS 767 / BCRC 21394 / JCM 1990 / NBRC 0083 / IGC 2968) (Yeast).